Here is a 105-residue protein sequence, read N- to C-terminus: Met repressor (105 aa).

It belongs to the MetJ family. Homodimer.

The protein localises to the cytoplasm. Its function is as follows. This regulatory protein, when combined with SAM (S-adenosylmethionine) represses the expression of the methionine regulon and of enzymes involved in SAM synthesis. In Yersinia pestis bv. Antiqua (strain Antiqua), this protein is Met repressor.